Consider the following 130-residue polypeptide: uncharacterized protein (130 aa).

A signal peptide spans 1–26 (MKFIYKLLFILSIVLFLFNNIITING). N-linked (GlcNAc...) asparagine glycosylation occurs at Asn-88.

Its subcellular location is the secreted. This is an uncharacterized protein from Dictyostelium discoideum (Social amoeba).